The chain runs to 85 residues: MCASRLVLLLGLLLCVGAHLSSGQHWSHGWYPGGKRELDSFGTSEISEEIKLCEAGECSYLRPQRRNILRNILLDALARELQKRK.

The signal sequence occupies residues 1–23; sequence MCASRLVLLLGLLLCVGAHLSSG. Gln-24 bears the Pyrrolidone carboxylic acid mark. Gly-33 is modified (glycine amide).

It belongs to the GnRH family. In terms of tissue distribution, midbrain tegmentum.

Its subcellular location is the secreted. Stimulates the secretion of gonadotropins. This chain is Progonadoliberin-2 (gnrh2), found in Verasper moseri (Barfin flounder).